We begin with the raw amino-acid sequence, 178 residues long: Caveolin-1 (178 aa).

Residue Ser2 is modified to N-acetylserine. At Ser2 the chain carries Phosphoserine. Residues 2-94 (SGGKYVDSEG…WKASFTTFTV (93 aa)) form a required for homooligomerization region. The Cytoplasmic portion of the chain corresponds to 2 to 104 (SGGKYVDSEG…TKYWFYRLLS (103 aa)). Lys5 bears the N6-acetyllysine; alternate mark. Residue Lys5 forms a Glycyl lysine isopeptide (Lys-Gly) (interchain with G-Cter in ubiquitin); alternate linkage. Residue Tyr6 is modified to Phosphotyrosine. Ser9 is modified (phosphoserine). Tyr14 is subject to Phosphotyrosine; by ABL1. Tyr25 is modified (phosphotyrosine). Glycyl lysine isopeptide (Lys-Gly) (interchain with G-Cter in ubiquitin) cross-links involve residues Lys26, Lys30, Lys39, Lys47, and Lys57. Positions 82-94 (DGIWKASFTTFTV) are interaction with CAVIN3. Residues 105–125 (ALFGIPMALIWGIYFAILSFL) constitute an intramembrane region (helical). At 126–178 (HIWAVVPCIKSFLIEIQCVSRVYSIYVHTFCDPFFEAVGKIFSSIRINMQKEI) the chain is on the cytoplasmic side. The interacts with SPRY1, SPRY2, SPRY3 and SPRY4 stretch occupies residues 131 to 142 (VPCIKSFLIEIQ). 3 S-palmitoyl cysteine lipidation sites follow: Cys133, Cys143, and Cys156. Positions 149–160 (SIYVHTFCDPFF) are interacts with SPRY1, SPRY2, and SPRY4. Positions 167–178 (FSSIRINMQKEI) are interacts with SPRY1, SPRY2, SPRY3 and SPRY4.

This sequence belongs to the caveolin family. In terms of assembly, homooligomer. Interacts with GLIPR2. Interacts with NOSTRIN. Interacts with SNAP25 and STX1A. Interacts (via the N-terminus) with DPP4; the interaction is direct. Interacts with CTNNB1, CDH1 and JUP. Interacts with PACSIN2; this interaction induces membrane tubulation. Interacts with SLC7A9. Interacts with BMX and BTK. Interacts with TGFBR1. Interacts with CAVIN3 (via leucine-zipper domain) in a cholesterol-sensitive manner. Interacts with CAVIN1. Interacts with EHD2 in a cholesterol-dependent manner. Forms a ternary complex with UBXN6 and VCP; mediates CAV1 targeting to lysosomes for degradation. Interacts with ABCG1; this interaction regulates ABCG1-mediated cholesterol efflux. Interacts with NEU3; this interaction enhances NEU3 sialidase activity within caveola. Interacts (via C-terminus) with SPRY1, SPRY2 (via C-terminus), SPRY3, and SPRY4. Interacts with IGFBP5; this interaction allows trafficking of IGFBP5 from the plasma membrane to the nucleus. Post-translationally, phosphorylated at Tyr-14 by ABL1 in response to oxidative stress. Ubiquitinated. Undergo monoubiquitination and multi- and/or polyubiquitination. Monoubiquitination of N-terminal lysines promotes integration in a ternary complex with UBXN6 and VCP which promotes oligomeric CAV1 targeting to lysosomes for degradation. Ubiquitinated by ZNRF1; leading to degradation and modulation of the TLR4-mediated immune response.

It is found in the golgi apparatus membrane. It localises to the cell membrane. The protein resides in the membrane. Its subcellular location is the caveola. The protein localises to the membrane raft. In terms of biological role, may act as a scaffolding protein within caveolar membranes. Forms a stable heterooligomeric complex with CAV2 that targets to lipid rafts and drives caveolae formation. Mediates the recruitment of CAVIN proteins (CAVIN1/2/3/4) to the caveolae. Interacts directly with G-protein alpha subunits and can functionally regulate their activity. Involved in the costimulatory signal essential for T-cell receptor (TCR)-mediated T-cell activation. Its binding to DPP4 induces T-cell proliferation and NF-kappa-B activation in a T-cell receptor/CD3-dependent manner. Recruits CTNNB1 to caveolar membranes and may regulate CTNNB1-mediated signaling through the Wnt pathway. Negatively regulates TGFB1-mediated activation of SMAD2/3 by mediating the internalization of TGFBR1 from membrane rafts leading to its subsequent degradation. Binds 20(S)-hydroxycholesterol (20(S)-OHC). The sequence is that of Caveolin-1 (CAV1) from Mustela putorius furo (European domestic ferret).